Here is a 347-residue protein sequence, read N- to C-terminus: MIDQDRIVDGHASGREDQLDRAVRPKRLAEYIGQPAVREQMEIFIGAARLREEALDHTLVFGPPGLGKTTLANIIATEMGGDLKTTSGPVLDKAGDLAALMTNLEAGDVLFIDEIHRLSPVVEEILYPAMEDFQLDIMIGDGPAARSIKLDLPPFTLVGATTRAGLLTSPLRDRFGIVQRLEFYSVQDLTHIVKRSAQLSGVAMEEAGGMEIARRARGTPRIANRLLRRVRDYAEVKGDGVITAAIADSALNMLNVDHHGFDHMDRRLLLALIEKFGGGPVGVDSLAAAISEERDTIEDVLEPYLIQQGFLVRTPRGRMATQNAYNHFGILAPKHLESQQQDSLPGI.

The segment at Gln-4–Tyr-184 is large ATPase domain (RuvB-L). Residues Arg-24, Gly-65, Lys-68, Thr-69, Thr-70, Glu-131–Phe-133, Arg-174, Tyr-184, and Arg-221 contribute to the ATP site. Thr-69 provides a ligand contact to Mg(2+). The segment at Ser-185–Asn-255 is small ATPAse domain (RuvB-S). The head domain (RuvB-H) stretch occupies residues His-258–Ile-347. DNA contacts are provided by Arg-294, Arg-313, and Arg-318.

It belongs to the RuvB family. In terms of assembly, homohexamer. Forms an RuvA(8)-RuvB(12)-Holliday junction (HJ) complex. HJ DNA is sandwiched between 2 RuvA tetramers; dsDNA enters through RuvA and exits via RuvB. An RuvB hexamer assembles on each DNA strand where it exits the tetramer. Each RuvB hexamer is contacted by two RuvA subunits (via domain III) on 2 adjacent RuvB subunits; this complex drives branch migration. In the full resolvosome a probable DNA-RuvA(4)-RuvB(12)-RuvC(2) complex forms which resolves the HJ.

The protein resides in the cytoplasm. The catalysed reaction is ATP + H2O = ADP + phosphate + H(+). The RuvA-RuvB-RuvC complex processes Holliday junction (HJ) DNA during genetic recombination and DNA repair, while the RuvA-RuvB complex plays an important role in the rescue of blocked DNA replication forks via replication fork reversal (RFR). RuvA specifically binds to HJ cruciform DNA, conferring on it an open structure. The RuvB hexamer acts as an ATP-dependent pump, pulling dsDNA into and through the RuvAB complex. RuvB forms 2 homohexamers on either side of HJ DNA bound by 1 or 2 RuvA tetramers; 4 subunits per hexamer contact DNA at a time. Coordinated motions by a converter formed by DNA-disengaged RuvB subunits stimulates ATP hydrolysis and nucleotide exchange. Immobilization of the converter enables RuvB to convert the ATP-contained energy into a lever motion, pulling 2 nucleotides of DNA out of the RuvA tetramer per ATP hydrolyzed, thus driving DNA branch migration. The RuvB motors rotate together with the DNA substrate, which together with the progressing nucleotide cycle form the mechanistic basis for DNA recombination by continuous HJ branch migration. Branch migration allows RuvC to scan DNA until it finds its consensus sequence, where it cleaves and resolves cruciform DNA. This Teredinibacter turnerae (strain ATCC 39867 / T7901) protein is Holliday junction branch migration complex subunit RuvB.